Reading from the N-terminus, the 59-residue chain is Cortexin domain containing 2 (59 aa).

Residues 20–40 (FAIAFVVLVFVFLIVMVFRCV) form a helical membrane-spanning segment.

It is found in the membrane. This Mus musculus (Mouse) protein is Cortexin domain containing 2.